The chain runs to 449 residues: Glutamate--tRNA ligase 2 (449 aa).

The 'HIGH' region signature appears at 11-21 (PSPTGFLHIGN). The short motif at 242–246 (GLSKR) is the 'KMSKS' region element. K245 contributes to the ATP binding site.

The protein belongs to the class-I aminoacyl-tRNA synthetase family. Glutamate--tRNA ligase type 1 subfamily. As to quaternary structure, monomer.

It localises to the cytoplasm. It catalyses the reaction tRNA(Glu) + L-glutamate + ATP = L-glutamyl-tRNA(Glu) + AMP + diphosphate. Catalyzes the attachment of glutamate to tRNA(Glu) in a two-step reaction: glutamate is first activated by ATP to form Glu-AMP and then transferred to the acceptor end of tRNA(Glu). This Methylorubrum populi (strain ATCC BAA-705 / NCIMB 13946 / BJ001) (Methylobacterium populi) protein is Glutamate--tRNA ligase 2.